We begin with the raw amino-acid sequence, 192 residues long: MKIDSATFYKSCSELKGLPVSSLPEIVFVGRSNVGKSTLLNTLTGRKALAKTSSTPGKTQLINYFTINDRLYFVDLPGYGYAKVAKGQRYEWGRLLGGYISEREEISLVVLLIDSRHPDMESDQQMIEFLEYYQRPYGIVLTKYDKLKQKEKSRVRKALKSFSLKTKFIVNYSALSGEGKESLLEQLENYTG.

In terms of domain architecture, EngB-type G spans 22-192 (SLPEIVFVGR…LLEQLENYTG (171 aa)). Residues 30–37 (GRSNVGKS), 57–61 (GKTQL), 75–78 (DLPG), 142–145 (TKYD), and 172–174 (YSA) contribute to the GTP site. Positions 37 and 59 each coordinate Mg(2+).

The protein belongs to the TRAFAC class TrmE-Era-EngA-EngB-Septin-like GTPase superfamily. EngB GTPase family. The cofactor is Mg(2+).

Necessary for normal cell division and for the maintenance of normal septation. This chain is Probable GTP-binding protein EngB, found in Prosthecochloris aestuarii (strain DSM 271 / SK 413).